Consider the following 63-residue polypeptide: UPF0337 protein PSPTO_1596 (63 aa).

The disordered stretch occupies residues 20–63 (KQAVGKATDNTKLQAEGKAQELKGEGQQAKGEVKDAVKKGVDKV). Basic and acidic residues predominate over residues 50–63 (GEVKDAVKKGVDKV).

It belongs to the UPF0337 (CsbD) family.

The protein is UPF0337 protein PSPTO_1596 of Pseudomonas syringae pv. tomato (strain ATCC BAA-871 / DC3000).